Consider the following 478-residue polypeptide: UDP-glycosyltransferase 90A1 (478 aa).

UDP-alpha-D-glucose contacts are provided by residues Thr289, 343–345 (VDQ), 360–368 (HCGWNSAQE), and 382–385 (MAEQ).

It belongs to the UDP-glycosyltransferase family.

The polypeptide is UDP-glycosyltransferase 90A1 (UGT90A1) (Arabidopsis thaliana (Mouse-ear cress)).